A 526-amino-acid chain; its full sequence is ATP synthase subunit alpha (526 aa).

171-178 (GDRQVGKT) provides a ligand contact to ATP.

Belongs to the ATPase alpha/beta chains family. As to quaternary structure, F-type ATPases have 2 components, CF(1) - the catalytic core - and CF(0) - the membrane proton channel. CF(1) has five subunits: alpha(3), beta(3), gamma(1), delta(1), epsilon(1). CF(0) has three main subunits: a(1), b(2) and c(9-12). The alpha and beta chains form an alternating ring which encloses part of the gamma chain. CF(1) is attached to CF(0) by a central stalk formed by the gamma and epsilon chains, while a peripheral stalk is formed by the delta and b chains.

It is found in the cell inner membrane. The catalysed reaction is ATP + H2O + 4 H(+)(in) = ADP + phosphate + 5 H(+)(out). Functionally, produces ATP from ADP in the presence of a proton gradient across the membrane. The alpha chain is a regulatory subunit. The chain is ATP synthase subunit alpha from Azobacteroides pseudotrichonymphae genomovar. CFP2.